A 134-amino-acid chain; its full sequence is Ribonuclease P protein component (134 aa).

It belongs to the RnpA family. Consists of a catalytic RNA component (M1 or rnpB) and a protein subunit.

It catalyses the reaction Endonucleolytic cleavage of RNA, removing 5'-extranucleotides from tRNA precursor.. RNaseP catalyzes the removal of the 5'-leader sequence from pre-tRNA to produce the mature 5'-terminus. It can also cleave other RNA substrates such as 4.5S RNA. The protein component plays an auxiliary but essential role in vivo by binding to the 5'-leader sequence and broadening the substrate specificity of the ribozyme. This is Ribonuclease P protein component from Ectopseudomonas mendocina (strain ymp) (Pseudomonas mendocina).